Reading from the N-terminus, the 247-residue chain is MSHRDTLFSAPIASLGDWTFDERVAEVFPDMIQRSVPGYSNIISMIGMLAERFVQPNTQVYDLGCSLGAATLSVRRNISHPGCRIIAIDNSPAMVERCRRHIDAYKAPTPVEVIEGDIRDVAIENASLVILNFTIQFLEPGDRQAILNKVYQGLNPGGALVLSEKFSFEDAHVGELLFNMHHDFKRANGYSELEISQKRSMLENVMLTDSVETHKARLRQAGFEHAELWFQCFNFGSLVAVKSGEQA.

S-adenosyl-L-methionine is bound by residues tyrosine 39, 64–66, 89–90, 117–118, asparagine 132, and arginine 199; these read GCS, DN, and DI.

Belongs to the class I-like SAM-binding methyltransferase superfamily. Cx-SAM synthase family. In terms of assembly, homodimer.

It carries out the reaction prephenate + S-adenosyl-L-methionine = carboxy-S-adenosyl-L-methionine + 3-phenylpyruvate + H2O. Its function is as follows. Catalyzes the conversion of S-adenosyl-L-methionine (SAM) to carboxy-S-adenosyl-L-methionine (Cx-SAM). The sequence is that of Carboxy-S-adenosyl-L-methionine synthase from Klebsiella pneumoniae (strain 342).